Here is an 862-residue protein sequence, read N- to C-terminus: Taxadiene synthase (862 aa).

Mg(2+) contacts are provided by aspartate 613, aspartate 617, asparagine 757, threonine 761, and glutamate 765. A DDXXD motif motif is present at residues aspartate 613–aspartate 617.

This sequence belongs to the terpene synthase family. The cofactor is Mg(2+).

It carries out the reaction (2E,6E,10E)-geranylgeranyl diphosphate = taxa-4(5),11(12)-diene + diphosphate. It participates in alkaloid biosynthesis; taxol biosynthesis; taxa-4(20),11-dien-5alpha-ol from geranylgeranyl diphosphate: step 1/2. Catalyzes the cyclization of the ubiquitous isoprenoid intermediate geranylgeranyl diphosphate to taxa-4,11-diene, the parent olefin with a taxane skeleton. The chain is Taxadiene synthase (TDC1) from Taxus baccata (English yew).